A 726-amino-acid chain; its full sequence is Dipeptidyl-peptidase 5 (726 aa).

A signal peptide spans 1–19 (MAAAKWLIASLAFASSGLA). N96 and N252 each carry an N-linked (GlcNAc...) asparagine glycan. A disordered region spans residues 269 to 291 (AEPINKRNGPRTPQAIEGASSSP). S558 serves as the catalytic Charge relay system. An N-linked (GlcNAc...) asparagine glycan is attached at N605. Residues D641 and H673 each act as charge relay system in the active site. N-linked (GlcNAc...) asparagine glycosylation occurs at N699.

It belongs to the peptidase S9C family.

The protein resides in the secreted. Its function is as follows. Extracellular dipeptidyl-peptidase which removes N-terminal dipeptides sequentially from polypeptides having unsubstituted N-termini. Contributes to pathogenicity. The sequence is that of Dipeptidyl-peptidase 5 (DPP5) from Trichophyton equinum (Horse ringworm fungus).